The following is a 683-amino-acid chain: U4/U6 small nuclear ribonucleoprotein Prp3 (683 aa).

Positions 1-87 (MALSKRELDE…HSKSSSDRSR (87 aa)) constitute a PWI domain. Positions 73–107 (GRSSRHSKSSSDRSRKRELKEVFGDDSEISKESSG) are enriched in basic and acidic residues. The segment at 73–135 (GRSSRHSKSS…IPGPPSESPG (63 aa)) is disordered. Lys-139 is covalently cross-linked (Glycyl lysine isopeptide (Lys-Gly) (interchain with G-Cter in SUMO2)). Residues 153 to 183 (IEERKKQLSFISPPTPQPKTPSSSQPERLPI) form a disordered region. Ser-164 carries the phosphoserine modification. A Phosphothreonine modification is found at Thr-167. Residues Lys-244 and Lys-252 each participate in a glycyl lysine isopeptide (Lys-Gly) (interchain with G-Cter in SUMO2) cross-link. A mediates interaction with SART3 region spans residues 416-550 (NLVEHPAQLN…VHISVYRVRN (135 aa)). A Phosphoserine modification is found at Ser-619.

In terms of assembly, component of the precatalytic spliceosome (spliceosome B complex). Component of the U4/U6-U5 tri-snRNP complex, a building block of the precatalytic spliceosome (spliceosome B complex). The U4/U6-U5 tri-snRNP complex is composed of the U4, U6 and U5 snRNAs and at least PRPF3, PRPF4, PRPF6, PRPF8, PRPF31, SNRNP200, TXNL4A, SNRNP40, SNRPB, SNRPD1, SNRPD2, SNRPD3, SNRPE, SNRPF, SNRPG, DDX23, CD2BP2, PPIH, SNU13, EFTUD2, SART1 and USP39, plus LSM2, LSM3, LSM4, LSM5, LSM6, LSM7 and LSM8. Interacts directly with PRPF4. Part of a heteromeric complex containing PPIH, PRPF3 and PRPF4 that is stable in the absence of RNA. Interacts with SART3; the interaction is direct and recruits the deubiquitinase USP4 to PRPF3. Interacts with PRPF19. Interacts ('Lys-63'-linked polyubiquitinated) with PRPF8 (via the MPN (JAB/Mov34) domain); may stabilize the U4/U6-U5 tri-snRNP complex. Interacts with ERCC6. In terms of processing, ubiquitinated. Undergoes 'Lys-63'-linked polyubiquitination by PRPF19 and deubiquitination by USP4. 'Lys-63'-linked ubiquitination increases the affinity for PRPF8 and may regulate the assembly of the U4/U6-U5 tri-snRNP complex.

The protein resides in the nucleus. It is found in the nucleus speckle. Its function is as follows. Plays a role in pre-mRNA splicing as component of the U4/U6-U5 tri-snRNP complex that is involved in spliceosome assembly, and as component of the precatalytic spliceosome (spliceosome B complex). This Pongo abelii (Sumatran orangutan) protein is U4/U6 small nuclear ribonucleoprotein Prp3 (PRPF3).